The sequence spans 955 residues: Kinesin-like protein K39 (955 aa).

One can recognise a Kinesin motor domain in the interval 12 to 392; that stretch reads RVKVSVRVRP…LRYASRARDI (381 aa). Residue 122 to 129 coordinates ATP; sequence GQTGSGKT. Positions 426 to 955 form a coiled coil; that stretch reads PAYVSELKKK…EERAAELASQ (530 aa). Disordered regions lie at residues 682 to 712 and 725 to 955; these read ELDA…RESE and TAAA…LASQ. Tandem repeats lie at residues 704 to 742, 743 to 781, 782 to 820, 821 to 859, 860 to 898, 899 to 937, and 938 to 955. The 7 X 39 AA approximate tandem repeats stretch occupies residues 704–955; sequence LEQQLRESEE…EERAAELASQ (252 aa). Basic and acidic residues-rich tracts occupy residues 785–794, 824–833, 863–872, 902–911, and 941–955; these read QLRDSEERAA, QLRESEERAA, and QLRD…LASQ.

The protein belongs to the TRAFAC class myosin-kinesin ATPase superfamily. Kinesin family.

Its subcellular location is the cytoplasm. The protein localises to the cytoskeleton. The protein is Kinesin-like protein K39 (KIN) of Leishmania chagasi.